A 131-amino-acid polypeptide reads, in one-letter code: Leptin receptor gene-related protein (131 aa).

The next 4 helical transmembrane spans lie at 7–27, 32–52, 69–89, and 100–120; these read LVAL…GCAL, VYWP…HFIA, LAYF…VILA, and GLVL…FLIF.

This sequence belongs to the OB-RGRP/VPS55 family. As to quaternary structure, interacts with LEPR. Interacts with RAB13. As to expression, expressed at the highest levels in heart and placenta and at a lesser extent in lung, liver, skeletal muscle, kidney and pancreas.

It is found in the golgi apparatus membrane. The protein resides in the endosome membrane. In terms of biological role, negatively regulates leptin receptor (LEPR) cell surface expression, and thus decreases response to leptin. Negatively regulates growth hormone (GH) receptor cell surface expression in liver. May play a role in liver resistance to GH during periods of reduced nutrient availability. This is Leptin receptor gene-related protein (LEPROT) from Homo sapiens (Human).